The primary structure comprises 152 residues: Immunity protein YobK (152 aa).

As to quaternary structure, interacts with cognate toxin YobL but not with non-cognate putative toxin YeeF. The interaction inhibits the toxic activity of YobL.

Its subcellular location is the cytoplasm. Immunity component of one of 6 LXG toxin-immunity modules in this strain. They promote kin selection, mediate competition in biofilms, and drive spatial segregation of different strains, indicating that LXG toxins may help avoid warfare between strains in biofilms. Mediates intercellular competition during biofilm formation; disruption of the operon disadvantages the bacteria, but overexpression of the cognate immunity protein restores growth in competition with wild-type. In situ neutralizes the toxic effect of cognate toxin YobL. Neutralizes the toxic activity of cognate toxin YobL upon expression in E.coli. Does not have immunity protein activity on other LXG toxins. This chain is Immunity protein YobK (yobK), found in Bacillus subtilis (strain 168).